Reading from the N-terminus, the 459-residue chain is tRNA modification GTPase MnmE (459 aa).

Residues arginine 21, glutamate 84, and arginine 123 each coordinate (6S)-5-formyl-5,6,7,8-tetrahydrofolate. Residues 219–378 (GVTVALAGAV…LLVLLYNFVL (160 aa)) form the TrmE-type G domain. GTP-binding positions include 229-234 (NAGKSS), 248-254 (TEHPGTT), and 273-276 (DTAG). Mg(2+) is bound by residues serine 233 and threonine 254. Lysine 459 provides a ligand contact to (6S)-5-formyl-5,6,7,8-tetrahydrofolate.

The protein belongs to the TRAFAC class TrmE-Era-EngA-EngB-Septin-like GTPase superfamily. TrmE GTPase family. As to quaternary structure, homodimer. Heterotetramer of two MnmE and two MnmG subunits. K(+) is required as a cofactor.

The protein localises to the cytoplasm. Exhibits a very high intrinsic GTPase hydrolysis rate. Involved in the addition of a carboxymethylaminomethyl (cmnm) group at the wobble position (U34) of certain tRNAs, forming tRNA-cmnm(5)s(2)U34. This Lawsonia intracellularis (strain PHE/MN1-00) protein is tRNA modification GTPase MnmE.